The sequence spans 153 residues: ORM1-like protein 1 (153 aa).

Over 1-26 (MNVGVAHSEVNPNTRVMNSRGMWLTY) the chain is Cytoplasmic. 2 helical membrane-spanning segments follow: residues 27-46 (ALGV…FSVP) and 47-64 (VAWT…YVFL). Residues 65-100 (HAVKGTPFETPDQGKARLLTHWEQLDYGVQFTSSRK) are Cytoplasmic-facing. A helical transmembrane segment spans residues 101–121 (FFTISPIILYFLASFYTKYDP). The Extracellular portion of the chain corresponds to 122–123 (TH). The chain crosses the membrane as a helical span at residues 124–140 (FILNTASLLSVLIPKMP). Over 141 to 153 (QLHGVRIFGINKY) the chain is Cytoplasmic.

It belongs to the ORM family. Ceramide-sensitive subunit of the serine palmitoyltransferase (SPT) complex, which is also composed of SPTLC1, SPTLC2/3 and SPTSSA/B. In terms of tissue distribution, widely expressed. Expressed in adult and fetal heart, brain, lung, liver, skeletal muscle and kidney. Expressed in adult pancreas and placenta and in fetal spleen abd thymus. Expressed at intermediate level in pancreas, placenta and brain but low in skeletal muscle and lung.

It localises to the endoplasmic reticulum membrane. In terms of biological role, plays an essential role in the homeostatic regulation of sphingolipid de novo biosynthesis by modulating the activity of the serine palmitoyltransferase (SPT) in response to ceramide levels. When complexed to SPT, the binding of ceramides to its N-terminus stabilizes a conformation that block SPT substrate entry, hence preventing SPT catalytic activity. Through this mechanism, maintains ceramide levels at sufficient concentrations for the production of complex sphingolipids, but which prevents the accumulation of ceramides to levels that trigger apoptosis. The chain is ORM1-like protein 1 (ORMDL1) from Homo sapiens (Human).